The sequence spans 256 residues: Chitinase 11 (256 aa).

The N-terminal stretch at 1-22 (MRRLLPLAGATLLIAAAGGASG) is a signal peptide. Disulfide bonds link Cys48–Cys109 and Cys214–Cys247. Glu91 serves as the catalytic Proton donor.

Belongs to the glycosyl hydrolase 19 family. Chitinase class II subfamily. Expressed in leaves and at lower levels in roots, sheaths and meristems.

It catalyses the reaction Random endo-hydrolysis of N-acetyl-beta-D-glucosaminide (1-&gt;4)-beta-linkages in chitin and chitodextrins.. The protein is Chitinase 11 (Cht11) of Oryza sativa subsp. japonica (Rice).